A 408-amino-acid chain; its full sequence is UDP-glucose 4-epimerase 2 (408 aa).

An NAD(+)-binding site is contributed by 13–44; it reads TVLVTGGAGYIGSHAVLQLLLAGFRAVVVDNL. S138 is a binding site for substrate. Y162 serves as the catalytic Proton acceptor. Residues 369–408 form a disordered region; the sequence is GSPKQNGHCTNGFSESTRHNGHNGYGLVDSAKHNGNGHFH. Polar residues predominate over residues 370 to 383; the sequence is SPKQNGHCTNGFSE.

The protein belongs to the NAD(P)-dependent epimerase/dehydratase family. The cofactor is NAD(+).

The catalysed reaction is UDP-alpha-D-glucose = UDP-alpha-D-galactose. It participates in carbohydrate metabolism; galactose metabolism. Catalyzes the interconversion between UDP-glucose and UDP-galactose. The polypeptide is UDP-glucose 4-epimerase 2 (UGE-2) (Oryza sativa subsp. japonica (Rice)).